The following is a 248-amino-acid chain: 2,3-bisphosphoglycerate-dependent phosphoglycerate mutase (248 aa).

Substrate is bound by residues 8-15 (RHGESTWN), 21-22 (TG), Arg-60, 87-90 (ERHY), Lys-98, 114-115 (RR), and 183-184 (GN). The active-site Tele-phosphohistidine intermediate is His-9. Glu-87 acts as the Proton donor/acceptor in catalysis.

The protein belongs to the phosphoglycerate mutase family. BPG-dependent PGAM subfamily. In terms of assembly, homodimer.

The catalysed reaction is (2R)-2-phosphoglycerate = (2R)-3-phosphoglycerate. It participates in carbohydrate degradation; glycolysis; pyruvate from D-glyceraldehyde 3-phosphate: step 3/5. Its function is as follows. Catalyzes the interconversion of 2-phosphoglycerate and 3-phosphoglycerate. This Paraburkholderia phymatum (strain DSM 17167 / CIP 108236 / LMG 21445 / STM815) (Burkholderia phymatum) protein is 2,3-bisphosphoglycerate-dependent phosphoglycerate mutase.